The chain runs to 217 residues: Pyrophosphatase PpaX (217 aa).

Residue Asp-11 is the Nucleophile of the active site.

This sequence belongs to the HAD-like hydrolase superfamily. PpaX family. It depends on Mg(2+) as a cofactor.

The enzyme catalyses diphosphate + H2O = 2 phosphate + H(+). Functionally, hydrolyzes pyrophosphate formed during P-Ser-HPr dephosphorylation by HPrK/P. Might play a role in controlling the intracellular pyrophosphate pool. This Listeria monocytogenes serotype 4b (strain CLIP80459) protein is Pyrophosphatase PpaX.